A 341-amino-acid chain; its full sequence is Anthranilate phosphoribosyltransferase (341 aa).

5-phospho-alpha-D-ribose 1-diphosphate contacts are provided by residues Gly82, 85–86 (GD), Thr90, 92–95 (NIST), 110–118 (KHGGRSVSG), and Ser122. Gly82 is a binding site for anthranilate. Ser94 provides a ligand contact to Mg(2+). Position 168 (Arg168) interacts with anthranilate. Residues Asp227 and Glu228 each coordinate Mg(2+).

The protein belongs to the anthranilate phosphoribosyltransferase family. Homodimer. Requires Mg(2+) as cofactor.

It catalyses the reaction N-(5-phospho-beta-D-ribosyl)anthranilate + diphosphate = 5-phospho-alpha-D-ribose 1-diphosphate + anthranilate. The protein operates within amino-acid biosynthesis; L-tryptophan biosynthesis; L-tryptophan from chorismate: step 2/5. Its function is as follows. Catalyzes the transfer of the phosphoribosyl group of 5-phosphorylribose-1-pyrophosphate (PRPP) to anthranilate to yield N-(5'-phosphoribosyl)-anthranilate (PRA). This is Anthranilate phosphoribosyltransferase from Nitrosomonas europaea (strain ATCC 19718 / CIP 103999 / KCTC 2705 / NBRC 14298).